Consider the following 419-residue polypeptide: 3-isopropylmalate dehydratase large subunit (419 aa).

Residues C300, C360, and C363 each coordinate [4Fe-4S] cluster.

This sequence belongs to the aconitase/IPM isomerase family. LeuC type 2 subfamily. As to quaternary structure, heterodimer of LeuC and LeuD. It depends on [4Fe-4S] cluster as a cofactor.

The catalysed reaction is (2R,3S)-3-isopropylmalate = (2S)-2-isopropylmalate. It functions in the pathway amino-acid biosynthesis; L-leucine biosynthesis; L-leucine from 3-methyl-2-oxobutanoate: step 2/4. In terms of biological role, catalyzes the isomerization between 2-isopropylmalate and 3-isopropylmalate, via the formation of 2-isopropylmaleate. This is 3-isopropylmalate dehydratase large subunit from Acetivibrio thermocellus (strain ATCC 27405 / DSM 1237 / JCM 9322 / NBRC 103400 / NCIMB 10682 / NRRL B-4536 / VPI 7372) (Clostridium thermocellum).